The primary structure comprises 1079 residues: Electrogenic sodium bicarbonate cotransporter 1 (1079 aa).

The interval 1 to 62 (MEDEAALDRG…EKKEKERVSE (62 aa)) is required for interaction with AHCYL1. Over 1 to 466 (MEDEAALDRG…FASDFYDALN (466 aa)) the chain is Cytoplasmic. Y30 carries the post-translational modification Phosphotyrosine. A compositionally biased stretch (basic residues) spans 39-52 (YRRRRRHKRKAGHR). A disordered region spans residues 39-78 (YRRRRRHKRKAGHREKKEKERVSENYSDKSDVENADESSS). Residues 53 to 70 (EKKEKERVSENYSDKSDV) show a composition bias toward basic and acidic residues. S61, S65, S68, S223, S232, S233, and S245 each carry phosphoserine. The tract at residues 238–265 (FTSPENGSPAMTHRNLTSSSLNDISDKP) is disordered. Phosphothreonine is present on residues T249 and T254. A compositionally biased stretch (polar residues) spans 251 to 260 (RNLTSSSLND). S256, S257, and S262 each carry phosphoserine. A helical membrane pass occupies residues 467-491 (IQALSAILFIYLATVTNAITFGGLL). The Extracellular segment spans residues 492-501 (GDATDNMQGV). Residues 502–520 (LESFLGTAVSGAVFCLFAG) traverse the membrane as a helical segment. Residue Q521 is a topological domain, cytoplasmic. The discontinuously helical transmembrane segment at 522-542 (PLTILSSTGPVLVFERLLFNF) threads the bilayer. The Extracellular portion of the chain corresponds to 543-550 (SKDHNFDY). A helical transmembrane segment spans residues 551 to 571 (LEFRLWIGLWSAFLCLILVAT). The Cytoplasmic portion of the chain corresponds to 572–585 (DASFLVQYFTRFTE). A helical membrane pass occupies residues 586-609 (EGFSSLISFIFIYDAFKKMIKLAD). Topologically, residues 610 to 692 (YYPINSNFKV…GNNCDFVPDI (83 aa)) are extracellular. A helical membrane pass occupies residues 693 to 710 (TLMSFILFLGTYTSSMAL). Residues 711-725 (KKFKTSRYFPTTARK) lie on the Cytoplasmic side of the membrane. A helical membrane pass occupies residues 726–745 (LISDFAIILSILIFCVIDAL). Residues 746–779 (VGVDTPKLIVPSEFKPTSPNRGWFVPPFGGNPWW) lie on the Extracellular side of the membrane. The segment at 748-779 (VDTPKLIVPSEFKPTSPNRGWFVPPFGGNPWW) is interaction with CA4. A helical membrane pass occupies residues 780 to 807 (VYLAAAIPALLVTILIFMDQQITAVIVN). Residues 808-819 (RKEHKLKKGAGY) lie on the Cytoplasmic side of the membrane. A helical transmembrane segment spans residues 820–836 (HLDLFWVAILMVVCSFM). A topological domain (extracellular) is located at residue A837. A discontinuously helical membrane pass occupies residues 838 to 855 (LPWYVAATVISIAHIDSL). Topologically, residues 856-877 (KMETETSAPGEQPKFLGVREQR) are cytoplasmic. Residues 878–894 (VTGTLVFILTGLSVFMA) form a helical membrane-spanning segment. Over 895–901 (PILKFIP) the chain is Extracellular. Residues 902 to 918 (MPVLYGVFLYMGVASLN) form a helical membrane-spanning segment. The Cytoplasmic segment spans residues 919–960 (GVQFMDRLKLLLMPLKHQPDFIYLRHVPLRRVHLFTFLQVLC). Positions 961–986 (LALLWILKSTVAAIIFPVMILALVAV) form an intramembrane region, discontinuously helical. Topologically, residues 987 to 1079 (RKGMDYLFSQ…PTFLERHTSC (93 aa)) are cytoplasmic. The interval 1002–1004 (LDD) is CA2-binding. The segment at 1012-1079 (KKKEDEKKKK…PTFLERHTSC (68 aa)) is disordered. S1026 is subject to Phosphoserine; by PKA. S1029 is subject to Phosphoserine. The tract at residues 1030–1033 (DSDD) is CA2-binding. A phosphoserine mark is found at S1034 and S1044. Residues 1057–1059 (FLS) are required for basolateral targeting. Residues 1062–1079 (KPSDRERSPTFLERHTSC) show a composition bias toward basic and acidic residues. S1069 is subject to Phosphoserine.

The protein belongs to the anion exchanger (TC 2.A.31) family. In terms of assembly, homodimer. Interacts with CA2/carbonic anhydrase 2 and CA4/carbonic anhydrase 4 which may regulate transporter activity. Isoform 1 but not isoform 2 interacts with AHCYL1 (via PEST domain when phosphorylated); the interaction increases SLC4A4 isoform 1 activity. Interacts with AHCYL2. Post-translationally, phosphorylation of Ser-1026 by PKA increases the binding of CA2 and changes the Na(+):HCO3(-) stoichiometry of the transporter from 3:1 to 2:1. Phosphorylated in presence of STK39 and dephosphorylated in presence of PP1 phosphatase; phosphorylation seems to inhibit SLC4A4 activity. N-glycosylated. May not be necessary for the transporter basic functions. Expressed in vas deferens epithelia (at protein level).

It localises to the basolateral cell membrane. It is found in the cell membrane. The enzyme catalyses 2 hydrogencarbonate(out) + Na(+)(out) = 2 hydrogencarbonate(in) + Na(+)(in). It catalyses the reaction 3 hydrogencarbonate(out) + Na(+)(out) = 3 hydrogencarbonate(in) + Na(+)(in). In terms of biological role, electrogenic sodium/bicarbonate cotransporter with a Na(+):HCO3(-) stoichiometry varying from 1:2 to 1:3. May regulate bicarbonate influx/efflux at the basolateral membrane of cells and regulate intracellular pH. This is Electrogenic sodium bicarbonate cotransporter 1 (SLC4A4) from Sus scrofa (Pig).